The following is a 476-amino-acid chain: Viral inhibitor of caspase-8-induced apoptosis (476 aa).

The protein belongs to the herpesviridae US22 family. As to quaternary structure, interacts with host pro-caspase-8/CASP8; this interaction inhibits CASP8 activation.

Its function is as follows. Plays a role in the inhibition of apoptosis by interacting with the pro-domain of pro-caspase-8/CASP8 and thus preventing its activation. This Human cytomegalovirus (strain Merlin) (HHV-5) protein is Viral inhibitor of caspase-8-induced apoptosis (UL36).